The primary structure comprises 245 residues: Biosynthetic peptidoglycan transglycosylase (245 aa).

The helical transmembrane segment at 20–42 (VYAGSVFAGAWLATQLFYLVQIA) threads the bilayer.

It belongs to the glycosyltransferase 51 family.

It localises to the cell inner membrane. The catalysed reaction is [GlcNAc-(1-&gt;4)-Mur2Ac(oyl-L-Ala-gamma-D-Glu-L-Lys-D-Ala-D-Ala)](n)-di-trans,octa-cis-undecaprenyl diphosphate + beta-D-GlcNAc-(1-&gt;4)-Mur2Ac(oyl-L-Ala-gamma-D-Glu-L-Lys-D-Ala-D-Ala)-di-trans,octa-cis-undecaprenyl diphosphate = [GlcNAc-(1-&gt;4)-Mur2Ac(oyl-L-Ala-gamma-D-Glu-L-Lys-D-Ala-D-Ala)](n+1)-di-trans,octa-cis-undecaprenyl diphosphate + di-trans,octa-cis-undecaprenyl diphosphate + H(+). It functions in the pathway cell wall biogenesis; peptidoglycan biosynthesis. In terms of biological role, peptidoglycan polymerase that catalyzes glycan chain elongation from lipid-linked precursors. This Burkholderia ambifaria (strain ATCC BAA-244 / DSM 16087 / CCUG 44356 / LMG 19182 / AMMD) (Burkholderia cepacia (strain AMMD)) protein is Biosynthetic peptidoglycan transglycosylase.